The chain runs to 255 residues: Thiazole synthase (255 aa).

The active-site Schiff-base intermediate with DXP is Lys-96. 1-deoxy-D-xylulose 5-phosphate is bound by residues Gly-157, Ala-183 to Gly-184, and Asn-205 to Thr-206.

It belongs to the ThiG family. As to quaternary structure, homotetramer. Forms heterodimers with either ThiH or ThiS.

The protein resides in the cytoplasm. The catalysed reaction is [ThiS sulfur-carrier protein]-C-terminal-Gly-aminoethanethioate + 2-iminoacetate + 1-deoxy-D-xylulose 5-phosphate = [ThiS sulfur-carrier protein]-C-terminal Gly-Gly + 2-[(2R,5Z)-2-carboxy-4-methylthiazol-5(2H)-ylidene]ethyl phosphate + 2 H2O + H(+). Its pathway is cofactor biosynthesis; thiamine diphosphate biosynthesis. Functionally, catalyzes the rearrangement of 1-deoxy-D-xylulose 5-phosphate (DXP) to produce the thiazole phosphate moiety of thiamine. Sulfur is provided by the thiocarboxylate moiety of the carrier protein ThiS. In vitro, sulfur can be provided by H(2)S. This chain is Thiazole synthase, found in Geobacillus thermodenitrificans (strain NG80-2).